The primary structure comprises 348 residues: Anthranilate phosphoribosyltransferase (348 aa).

5-phospho-alpha-D-ribose 1-diphosphate is bound by residues Gly93, 96–97, Thr101, 103–106, 121–129, and Ser133; these read GD, NVST, and KHGNRAVSS. Gly93 contacts anthranilate. Ser105 contacts Mg(2+). Asn124 is a binding site for anthranilate. Arg179 contacts anthranilate. Mg(2+)-binding residues include Asp238 and Glu239.

Belongs to the anthranilate phosphoribosyltransferase family. As to quaternary structure, homodimer. Requires Mg(2+) as cofactor.

The enzyme catalyses N-(5-phospho-beta-D-ribosyl)anthranilate + diphosphate = 5-phospho-alpha-D-ribose 1-diphosphate + anthranilate. It participates in amino-acid biosynthesis; L-tryptophan biosynthesis; L-tryptophan from chorismate: step 2/5. In terms of biological role, catalyzes the transfer of the phosphoribosyl group of 5-phosphorylribose-1-pyrophosphate (PRPP) to anthranilate to yield N-(5'-phosphoribosyl)-anthranilate (PRA). The protein is Anthranilate phosphoribosyltransferase of Desulfotalea psychrophila (strain LSv54 / DSM 12343).